Reading from the N-terminus, the 739-residue chain is DEAD-box ATP-dependent RNA helicase 32 (739 aa).

The Q motif motif lies at 71 to 99; sequence RKFAQLPISDKTKRGLKDAKYVDMTDVQS. Residues 102–277 form the Helicase ATP-binding domain; sequence IPHALCGRDI…RLSLRDPEYI (176 aa). 115–122 contributes to the ATP binding site; sequence ARTGSGKT. A DEAD box motif is present at residues 225 to 228; sequence DEAD. The 159-residue stretch at 303–461 folds into the Helicase C-terminal domain; the sequence is KLDMLWSFIK…EVSRLLAALL (159 aa). Positions 643-689 form a coiled coil; it reads GAEMRKADIEDKKVDKERRREKRMKQKIKRKRGAMEDEEEEEEEDHD. Residues 656–725 are disordered; sequence VDKERRREKR…GGKINTDSLS (70 aa). Residues 661–674 show a composition bias toward basic residues; the sequence is RREKRMKQKIKRKR. Positions 678-688 are enriched in acidic residues; that stretch reads EDEEEEEEEDH.

This sequence belongs to the DEAD box helicase family. DDX10/DBP4 subfamily.

It catalyses the reaction ATP + H2O = ADP + phosphate + H(+). The protein is DEAD-box ATP-dependent RNA helicase 32 (RH32) of Arabidopsis thaliana (Mouse-ear cress).